The sequence spans 122 residues: Large ribosomal subunit protein uL14c (122 aa).

Belongs to the universal ribosomal protein uL14 family. In terms of assembly, part of the 50S ribosomal subunit.

Its subcellular location is the plastid. The protein localises to the chloroplast. Its function is as follows. Binds to 23S rRNA. The chain is Large ribosomal subunit protein uL14c from Nandina domestica (Heavenly bamboo).